Here is a 122-residue protein sequence, read N- to C-terminus: Large ribosomal subunit protein uL14 (122 aa).

This sequence belongs to the universal ribosomal protein uL14 family. Part of the 50S ribosomal subunit. Forms a cluster with proteins L3 and L19. In the 70S ribosome, L14 and L19 interact and together make contacts with the 16S rRNA in bridges B5 and B8.

Its function is as follows. Binds to 23S rRNA. Forms part of two intersubunit bridges in the 70S ribosome. The chain is Large ribosomal subunit protein uL14 from Magnetococcus marinus (strain ATCC BAA-1437 / JCM 17883 / MC-1).